A 247-amino-acid polypeptide reads, in one-letter code: MKMRAVAVFTGMLTGVLSVTGLLSAGAYAAGGEGNMSASATETNARVFSLHLGATRVVYNPASSGETLTVINDQDYPMLVQSEVLSEDQKSPAPFWWTPPLFRRDGQQSSRRRSVSTGGEFPSDRESRQWICVKGIPPKEDDRWAEGKDGEKKADKVSLNVQLSVSSCIKLFVRPPAVKGRPDDVAGKVEWQRAGNRLKGVNPTPFYINLSTLTVGGKEVKEREYIAPFSSREYPLPAGHRVRFSGR.

The N-terminal stretch at 1–29 is a signal peptide; sequence MKMRAVAVFTGMLTGVLSVTGLLSAGAYA. A disordered region spans residues 106–125; the sequence is GQQSSRRRSVSTGGEFPSDR.

It belongs to the periplasmic pilus chaperone family.

The protein resides in the periplasm. Involved in the biogenesis of the NFA-I adhesin. This chain is Chaperone protein NfaE (nfaE), found in Escherichia coli.